We begin with the raw amino-acid sequence, 29 residues long: Galanin (29 aa).

The residue at position 29 (Ala-29) is an Alanine amide.

This sequence belongs to the galanin family.

It localises to the secreted. In terms of biological role, contracts smooth muscle of the gastrointestinal and genitourinary tract, regulates growth hormone release, modulates insulin release, and may be involved in the control of adrenal secretion. In Oncorhynchus mykiss (Rainbow trout), this protein is Galanin (gal).